The chain runs to 311 residues: GTP cyclohydrolase MptA (311 aa).

It belongs to the GTP cyclohydrolase IV family. As to quaternary structure, homodimer. The cofactor is Fe(2+).

It catalyses the reaction GTP + H2O = 7,8-dihydroneopterin 2',3'-cyclic phosphate + formate + diphosphate + H(+). It participates in cofactor biosynthesis; 5,6,7,8-tetrahydromethanopterin biosynthesis. In terms of biological role, converts GTP to 7,8-dihydro-D-neopterin 2',3'-cyclic phosphate, the first intermediate in the biosynthesis of coenzyme methanopterin. This is GTP cyclohydrolase MptA from Halobacterium salinarum (strain ATCC 29341 / DSM 671 / R1).